Consider the following 1199-residue polypeptide: DNA-directed RNA polymerase subunit beta' (1199 aa).

Residues Cys60, Cys62, Cys75, and Cys78 each coordinate Zn(2+). Residues Asp449, Asp451, and Asp453 each coordinate Mg(2+). The Zn(2+) site is built by Cys818, Cys892, Cys899, and Cys902.

The protein belongs to the RNA polymerase beta' chain family. The RNAP catalytic core consists of 2 alpha, 1 beta, 1 beta' and 1 omega subunit. When a sigma factor is associated with the core the holoenzyme is formed, which can initiate transcription. It depends on Mg(2+) as a cofactor. Requires Zn(2+) as cofactor.

The enzyme catalyses RNA(n) + a ribonucleoside 5'-triphosphate = RNA(n+1) + diphosphate. Its function is as follows. DNA-dependent RNA polymerase catalyzes the transcription of DNA into RNA using the four ribonucleoside triphosphates as substrates. The sequence is that of DNA-directed RNA polymerase subunit beta' from Bacillus licheniformis (strain ATCC 14580 / DSM 13 / JCM 2505 / CCUG 7422 / NBRC 12200 / NCIMB 9375 / NCTC 10341 / NRRL NRS-1264 / Gibson 46).